Consider the following 462-residue polypeptide: UDP-N-acetylmuramoylalanine--D-glutamate ligase (462 aa).

118-124 contributes to the ATP binding site; sequence GTNGKST.

The protein belongs to the MurCDEF family.

Its subcellular location is the cytoplasm. The catalysed reaction is UDP-N-acetyl-alpha-D-muramoyl-L-alanine + D-glutamate + ATP = UDP-N-acetyl-alpha-D-muramoyl-L-alanyl-D-glutamate + ADP + phosphate + H(+). Its pathway is cell wall biogenesis; peptidoglycan biosynthesis. Cell wall formation. Catalyzes the addition of glutamate to the nucleotide precursor UDP-N-acetylmuramoyl-L-alanine (UMA). This Anaeromyxobacter dehalogenans (strain 2CP-C) protein is UDP-N-acetylmuramoylalanine--D-glutamate ligase.